The following is a 422-amino-acid chain: Histone deacetylase B (422 aa).

Aspartate 102 lines the substrate pocket. The active-site Proton acceptor is histidine 144. Glycine 152 is a binding site for substrate. A divalent metal cation contacts are provided by aspartate 179, histidine 181, and aspartate 268. Tyrosine 307 lines the substrate pocket. A disordered region spans residues 399 to 422; that stretch reads IDFDRDEDSKENMDKRKKKHNDFS. The segment covering 413–422 has biased composition (basic residues); that stretch reads KRKKKHNDFS.

This sequence belongs to the histone deacetylase family. HD type 1 subfamily.

It localises to the nucleus. It is found in the cytoplasm. The enzyme catalyses N(6)-acetyl-L-lysyl-[histone] + H2O = L-lysyl-[histone] + acetate. Its activity is inhibited by trichostatin A (TSA), a well known histone deacetylase inhibitor. Cytosolic activity is refractory to inhibition by TSA, while the nuclear activity is inhibited completely. Its function is as follows. Responsible for the deacetylation of lysine residues on the N-terminal part of the core histones (H2A, H2B, H3 and H4). Histone deacetylation plays an important role in transcriptional regulation, cell cycle progression and developmental events. Histone deacetylases act via the formation of large multiprotein complexes. May play a role in the regulation of the timing of gene expression during the development and in the definition aspects of the phenotype that mediate social behavior in genetically heterogeneous groups. In Dictyostelium discoideum (Social amoeba), this protein is Histone deacetylase B (hdaB).